The primary structure comprises 320 residues: tRNA dimethylallyltransferase (320 aa).

14–21 (GPTASGKT) contacts ATP. 16–21 (TASGKT) is a binding site for substrate. 2 interaction with substrate tRNA regions span residues 39 to 42 (DSAL) and 163 to 167 (QRLQR).

Belongs to the IPP transferase family. In terms of assembly, monomer. Mg(2+) serves as cofactor.

The catalysed reaction is adenosine(37) in tRNA + dimethylallyl diphosphate = N(6)-dimethylallyladenosine(37) in tRNA + diphosphate. Its function is as follows. Catalyzes the transfer of a dimethylallyl group onto the adenine at position 37 in tRNAs that read codons beginning with uridine, leading to the formation of N6-(dimethylallyl)adenosine (i(6)A). This chain is tRNA dimethylallyltransferase, found in Thioalkalivibrio sulfidiphilus (strain HL-EbGR7).